Reading from the N-terminus, the 388-residue chain is Queuine tRNA-ribosyltransferase (388 aa).

Asp91 (proton acceptor) is an active-site residue. Substrate-binding positions include 91-95 (DSGGY), Asp145, Gln190, and Gly217. The RNA binding stretch occupies residues 248–254 (GVGAPED). Residue Asp267 is the Nucleophile of the active site. The segment at 272-276 (TRLAR) is RNA binding; important for wobble base 34 recognition. 4 residues coordinate Zn(2+): Cys305, Cys307, Cys310, and His336.

The protein belongs to the queuine tRNA-ribosyltransferase family. Homodimer. Within each dimer, one monomer is responsible for RNA recognition and catalysis, while the other monomer binds to the replacement base PreQ1. Zn(2+) serves as cofactor.

It carries out the reaction 7-aminomethyl-7-carbaguanine + guanosine(34) in tRNA = 7-aminomethyl-7-carbaguanosine(34) in tRNA + guanine. The protein operates within tRNA modification; tRNA-queuosine biosynthesis. In terms of biological role, catalyzes the base-exchange of a guanine (G) residue with the queuine precursor 7-aminomethyl-7-deazaguanine (PreQ1) at position 34 (anticodon wobble position) in tRNAs with GU(N) anticodons (tRNA-Asp, -Asn, -His and -Tyr). Catalysis occurs through a double-displacement mechanism. The nucleophile active site attacks the C1' of nucleotide 34 to detach the guanine base from the RNA, forming a covalent enzyme-RNA intermediate. The proton acceptor active site deprotonates the incoming PreQ1, allowing a nucleophilic attack on the C1' of the ribose to form the product. After dissociation, two additional enzymatic reactions on the tRNA convert PreQ1 to queuine (Q), resulting in the hypermodified nucleoside queuosine (7-(((4,5-cis-dihydroxy-2-cyclopenten-1-yl)amino)methyl)-7-deazaguanosine). The protein is Queuine tRNA-ribosyltransferase of Dictyoglomus turgidum (strain DSM 6724 / Z-1310).